A 712-amino-acid chain; its full sequence is Copper amine oxidase 1 (712 aa).

Substrate is bound at residue 319-330 (AFDLGEYGAGYL). Residue Asp-321 is the Proton acceptor of the active site. Cys-340 and Cys-366 are joined by a disulfide. Residue 404–409 (AANYEY) coordinates substrate. Tyr-407 serves as the catalytic Schiff-base intermediate with substrate; via topaquinone. Tyr-407 carries the 2',4',5'-topaquinone modification. Positions 458 and 460 each coordinate Cu cation. Residues Asp-616 and Ile-617 each coordinate Mn(2+). Cu cation is bound at residue His-627.

Belongs to the copper/topaquinone oxidase family. Homodimer. It depends on Cu cation as a cofactor. Requires Zn(2+) as cofactor. L-topaquinone is required as a cofactor. The cofactor is Mn(2+). Post-translationally, topaquinone (TPQ) is generated by copper-dependent autoxidation of a specific tyrosyl residue.

The protein localises to the cytoplasm. The enzyme catalyses a primary methyl amine + O2 + H2O = an aldehyde + H2O2 + NH4(+). Copper amine oxidase involved in the metabolism of xenobiotic and biogenic amines. Capable of catalyzing the oxidative deamination of primary amines such as ethylamine as alternate sources of nitrogen to support growth. The polypeptide is Copper amine oxidase 1 (cao1) (Schizosaccharomyces pombe (strain 972 / ATCC 24843) (Fission yeast)).